We begin with the raw amino-acid sequence, 822 residues long: Stemar-13-ene synthase (822 aa).

Residues 1 to 10 are compositionally biased toward polar residues; sequence MMLLSSSYSG. The segment at 1 to 29 is disordered; that stretch reads MMLLSSSYSGGQFPGVSPLGTRPKRSTTV. The Mg(2+) site is built by aspartate 553, aspartate 557, asparagine 698, threonine 702, and glutamate 706. The DDXXD motif motif lies at 553–557; sequence DDLFD.

Belongs to the terpene synthase family. Mg(2+) serves as cofactor.

The enzyme catalyses 9alpha-copalyl diphosphate = stemar-13-ene + diphosphate. Its function is as follows. Catalyzes the conversion of syn-copalyl diphosphate to the phytoalexin precursor stemarene. In Oryza sativa subsp. japonica (Rice), this protein is Stemar-13-ene synthase (KSL8).